The primary structure comprises 336 residues: Glucokinase (336 aa).

12 to 17 (ADIGGT) lines the ATP pocket.

It belongs to the bacterial glucokinase family.

The protein localises to the cytoplasm. It catalyses the reaction D-glucose + ATP = D-glucose 6-phosphate + ADP + H(+). The chain is Glucokinase from Helicobacter pylori (strain P12).